Here is a 235-residue protein sequence, read N- to C-terminus: Large ribosomal subunit protein uL1 (235 aa).

It belongs to the universal ribosomal protein uL1 family. Part of the 50S ribosomal subunit.

In terms of biological role, binds directly to 23S rRNA. The L1 stalk is quite mobile in the ribosome, and is involved in E site tRNA release. Functionally, protein L1 is also a translational repressor protein, it controls the translation of the L11 operon by binding to its mRNA. This chain is Large ribosomal subunit protein uL1, found in Mycobacterium sp. (strain JLS).